Here is a 165-residue protein sequence, read N- to C-terminus: Protein eva-1 homolog B (165 aa).

Residues 29–49 form a helical membrane-spanning segment; the sequence is GLYFVLGVCFGLLLTLCLLVI. 2 disordered regions span residues 57–109 and 143–165; these read PRPR…GPLN and LLGT…MHYY. Residues 74 to 84 show a composition bias toward acidic residues; that stretch reads EPEDDDEDEED. 3 positions are modified to phosphothreonine: Thr85, Thr148, and Thr158.

The protein belongs to the EVA1 family.

It is found in the membrane. The protein is Protein eva-1 homolog B (EVA1B) of Homo sapiens (Human).